Consider the following 176-residue polypeptide: RNA polymerase sigma factor SigZ (176 aa).

The short motif at 30-43 (DLLQIVFMKIQVHL) is the Polymerase core binding element. A DNA-binding region (H-T-H motif) is located at residues 125–144 (QKELSEKLGISYSGAKSRVQ).

It belongs to the sigma-70 factor family. ECF subfamily.

Its function is as follows. Sigma factors are initiation factors that promote the attachment of RNA polymerase to specific initiation sites and are then released. The protein is RNA polymerase sigma factor SigZ (sigZ) of Bacillus subtilis (strain 168).